Here is a 609-residue protein sequence, read N- to C-terminus: MCGIVGAIAQRDVAEILLEGLRRLEYRGYDSAGLAVVDAEGHMTRLRRLGKVQMLAQAAEEHPLHGGTGIAHTRWATHGEPSEANAHPHVSEHIVVVHNGIIENHEPLREALKARGYTFVSETDTEVIAHLVNWELKQGGTLREAVLRAIPQLRGAYGTVIMDTRHPDTLLAARSGSPLVIGLGMGENFIASDQLALLPVTRRFIFLEEGDIAEITRRSVNIFDNTGAEVKRQDIESNLQYDAGDKGIYRHYMQKEIYEQPNAIKNTLTGRISHGQVDLSELGPNADELLSKVEHIQILACGTSYNSGMVSRYWFESLAGIPCDVEIASEFRYRKSAVRRNSLMITLSQSGETADTLAGLRLSKELGYLGSLAICNVPGSSLVRESDLALMTNAGTEIGVASTKAFTTQLTVLLMLVAKLSRLKGLDASIEHDIVHGLQALPSRIEQMLSQDKRIELLAEDFSDKHHALFLGRGDQYPIALEGALKLKEISYIHAEAYAAGELKHGPLALIDADMPVIVVAPNNELLEKLKSNIEEVRARGGQLYVFADQDAGFVSNDNMHIIEMPHVEEVIAPIFYTVPLQLLAYHVALIKGTDVDQPRNLAKSVTVE.

The active-site Nucleophile; for GATase activity is the cysteine 2. The 217-residue stretch at 2–218 folds into the Glutamine amidotransferase type-2 domain; that stretch reads CGIVGAIAQR…EGDIAEITRR (217 aa). 2 consecutive SIS domains span residues 286-426 and 458-599; these read ADEL…LKGL and LAED…VDQP. Lysine 604 acts as the For Fru-6P isomerization activity in catalysis.

In terms of assembly, homodimer.

Its subcellular location is the cytoplasm. The catalysed reaction is D-fructose 6-phosphate + L-glutamine = D-glucosamine 6-phosphate + L-glutamate. Functionally, catalyzes the first step in hexosamine metabolism, converting fructose-6P into glucosamine-6P using glutamine as a nitrogen source. This Salmonella typhimurium (strain LT2 / SGSC1412 / ATCC 700720) protein is Glutamine--fructose-6-phosphate aminotransferase [isomerizing].